A 143-amino-acid chain; its full sequence is Large ribosomal subunit protein uL11 (143 aa).

It belongs to the universal ribosomal protein uL11 family. Part of the ribosomal stalk of the 50S ribosomal subunit. Interacts with L10 and the large rRNA to form the base of the stalk. L10 forms an elongated spine to which L12 dimers bind in a sequential fashion forming a multimeric L10(L12)X complex. Post-translationally, one or more lysine residues are methylated.

Functionally, forms part of the ribosomal stalk which helps the ribosome interact with GTP-bound translation factors. This is Large ribosomal subunit protein uL11 from Azoarcus sp. (strain BH72).